A 142-amino-acid polypeptide reads, in one-letter code: Large ribosomal subunit protein uL11 (142 aa).

This sequence belongs to the universal ribosomal protein uL11 family. As to quaternary structure, part of the ribosomal stalk of the 50S ribosomal subunit. Interacts with L10 and the large rRNA to form the base of the stalk. L10 forms an elongated spine to which L12 dimers bind in a sequential fashion forming a multimeric L10(L12)X complex. In terms of processing, one or more lysine residues are methylated.

Forms part of the ribosomal stalk which helps the ribosome interact with GTP-bound translation factors. The chain is Large ribosomal subunit protein uL11 from Gamma-proteobacterium EBAC31A08.